The primary structure comprises 763 residues: Ras and Rab interactor 1 (763 aa).

Methionine 1 carries the N-acetylmethionine modification. The disordered stretch occupies residues 1 to 52 (MEDPGETGAHPLGATNLNFVPGHQQKEKPSTDPLYDTPDTRGVQAGGSQQPA). Residue tyrosine 35 is modified to Phosphotyrosine; by ABL1 and ABL2. The SH2 domain maps to 68-151 (WLQLRANAAA…QLICGYCRTR (84 aa)). 3 disordered regions span residues 177–200 (LNTKDQQRPSEAPPIPRLKARSPQ), 238–273 (STETSSPLSPPAVPPPPVPVLPGTSSSQTERLPPRQ), and 301–331 (QEVDCCSPSSSEEEGSSGSPTTSPRLSRPRH). Phosphoserine is present on residues serine 198, serine 246, serine 319, and serine 323. A compositionally biased stretch (pro residues) spans 245–257 (LSPPAVPPPPVPV). Low complexity predominate over residues 316-326 (SSGSPTTSPRL). Serine 340 is subject to Phosphoserine; by PKD/PRKD1. Residues 445-587 (LSADGSLGRL…LSGLSQARAL (143 aa)) form the VPS9 domain. Serine 598 is modified (phosphoserine). The Ras-associating domain maps to 613 to 695 (FQHLLRVAYQ…GYLIYRRAER (83 aa)). Arginine 681 carries the omega-N-methylarginine modification. Residues 698-763 (TQGAVAEKAK…KAEGSQALEE (66 aa)) form a disordered region. Basic and acidic residues predominate over residues 727 to 755 (REGKPRIAVDQEGKDQARGGHIGPEEQKA).

This sequence belongs to the RIN (Ras interaction/interference) family. As to quaternary structure, interacts with the GTP-bound form of Ras proteins (NRAS, HRAS and KRAS). This interaction prevents the association between RAF1 and Ras. Interacts with 14-3-3 proteins YWHAB, YWHAE and YWHAZ when phosphorylated on Ser-340. Interacts with the SH3 domain of ABL1 and ABL2. Interacts with RAB5A. The interaction with Ras is probably regulated and antagonized by the interaction with 14-3-3 proteins. The interaction with 14-3-3 proteins is regulated by phosphorylation on Ser-340. In terms of processing, phosphorylated on tyrosine residues by ABL1 and ABL2. Phosphorylation at Ser-340 by PRKD1 induces interaction with 14-3-3 proteins. As to expression, highly expressed in brain. Weakly or no expressed in other tissues, except in testis, where it is expressed at intermediate level. In brain, it is mainly expressed in postnatal forebrain neurons in which it is localized in dendrites and colocalizes with Ras.

The protein resides in the cytoplasm. It localises to the membrane. Its subcellular location is the cytoskeleton. Functionally, ras effector protein, which may serve as an inhibitory modulator of neuronal plasticity in aversive memory formation. Can affect Ras signaling at different levels. First, by competing with RAF1 protein for binding to activated Ras. Second, by enhancing signaling from ABL1 and ABL2, which regulate cytoskeletal remodeling. Third, by activating RAB5A, possibly by functioning as a guanine nucleotide exchange factor (GEF) for RAB5A, by exchanging bound GDP for free GTP, and facilitating Ras-activated receptor endocytosis. This Mus musculus (Mouse) protein is Ras and Rab interactor 1 (Rin1).